The chain runs to 100 residues: NADH-quinone oxidoreductase subunit K (100 aa).

The next 3 membrane-spanning stretches (helical) occupy residues 3 to 23, 29 to 49, and 60 to 80; these read PTSYYILLSALLFTLGVVGVI, LVLFMSVELMLNSANLALVTF, and IVVFFVIVVAAAEVAVGLALL.

It belongs to the complex I subunit 4L family. In terms of assembly, NDH-1 is composed of 14 different subunits. Subunits NuoA, H, J, K, L, M, N constitute the membrane sector of the complex.

It localises to the cell membrane. The catalysed reaction is a quinone + NADH + 5 H(+)(in) = a quinol + NAD(+) + 4 H(+)(out). In terms of biological role, NDH-1 shuttles electrons from NADH, via FMN and iron-sulfur (Fe-S) centers, to quinones in the respiratory chain. The immediate electron acceptor for the enzyme in this species is believed to be ubiquinone. Couples the redox reaction to proton translocation (for every two electrons transferred, four hydrogen ions are translocated across the cytoplasmic membrane), and thus conserves the redox energy in a proton gradient. This chain is NADH-quinone oxidoreductase subunit K, found in Roseiflexus castenholzii (strain DSM 13941 / HLO8).